The chain runs to 469 residues: Ribulose bisphosphate carboxylase large chain (469 aa).

Residues 1–2 constitute a propeptide that is removed on maturation; sequence MS. An N-acetylproline modification is found at Pro3. Lys14 is modified (N6,N6,N6-trimethyllysine). Positions 123 and 173 each coordinate substrate. Lys175 serves as the catalytic Proton acceptor. Residue Lys177 coordinates substrate. Residues Lys201, Asp203, and Glu204 each coordinate Mg(2+). The residue at position 201 (Lys201) is an N6-carboxylysine. The Proton acceptor role is filled by His294. The substrate site is built by Arg295, His327, and Ser379.

The protein belongs to the RuBisCO large chain family. Type I subfamily. In terms of assembly, heterohexadecamer of 8 large chains and 8 small chains; disulfide-linked. The disulfide link is formed within the large subunit homodimers. Requires Mg(2+) as cofactor. The disulfide bond which can form in the large chain dimeric partners within the hexadecamer appears to be associated with oxidative stress and protein turnover.

The protein resides in the plastid. It localises to the chloroplast. It carries out the reaction 2 (2R)-3-phosphoglycerate + 2 H(+) = D-ribulose 1,5-bisphosphate + CO2 + H2O. The enzyme catalyses D-ribulose 1,5-bisphosphate + O2 = 2-phosphoglycolate + (2R)-3-phosphoglycerate + 2 H(+). In terms of biological role, ruBisCO catalyzes two reactions: the carboxylation of D-ribulose 1,5-bisphosphate, the primary event in carbon dioxide fixation, as well as the oxidative fragmentation of the pentose substrate in the photorespiration process. Both reactions occur simultaneously and in competition at the same active site. In Iris ensata (Japanese iris), this protein is Ribulose bisphosphate carboxylase large chain.